A 492-amino-acid chain; its full sequence is N-succinylglutamate 5-semialdehyde dehydrogenase (492 aa).

Position 220 to 225 (220 to 225 (GSANTG)) interacts with NAD(+). Residues E243 and C277 contribute to the active site.

Belongs to the aldehyde dehydrogenase family. AstD subfamily.

It carries out the reaction N-succinyl-L-glutamate 5-semialdehyde + NAD(+) + H2O = N-succinyl-L-glutamate + NADH + 2 H(+). It participates in amino-acid degradation; L-arginine degradation via AST pathway; L-glutamate and succinate from L-arginine: step 4/5. Its function is as follows. Catalyzes the NAD-dependent reduction of succinylglutamate semialdehyde into succinylglutamate. This chain is N-succinylglutamate 5-semialdehyde dehydrogenase, found in Escherichia coli O127:H6 (strain E2348/69 / EPEC).